The chain runs to 548 residues: Natural resistance-associated macrophage protein 1 (548 aa).

Polar residues predominate over residues 1-11 (MSGDTGPSKQG). The tract at residues 1-38 (MSGDTGPSKQGGTRYGSISSPPSPGPQQAPPGGTYLGE) is disordered. Residues 1 to 55 (MSGDTGPSKQGGTRYGSISSPPSPGPQQAPPGGTYLGEKIPIPDTESGAFSLRKL) lie on the Cytoplasmic side of the membrane. The chain crosses the membrane as a helical span at residues 56-73 (WAFTGPGFLMSIAFLDPG). At 74–82 (NIESDLQAG) the chain is on the extracellular side. The chain crosses the membrane as a helical span at residues 83–102 (AVAGFKLLWVLLWATVLGLL). Over 103–139 (CQRLAARLGVVTGKDLGEVCHLYYPKVPRILLWLTIE) the chain is Cytoplasmic. A helical membrane pass occupies residues 140–160 (LAIVGSDMQEVIGTAIAFSLL). Residues 161–164 (SAGR) lie on the Extracellular side of the membrane. The helical transmembrane segment at 165–184 (IPLWGGVLITVVDTFFFLFL) threads the bilayer. Over 185 to 193 (DNYGLRKLE) the chain is Cytoplasmic. A helical membrane pass occupies residues 194 to 214 (AFFGFLITIMALTFGYEYVVA). Over 215–237 (QPAQGALLQGLFLPSCRGCGQPE) the chain is Extracellular. A helical transmembrane segment spans residues 238 to 256 (LLQAVGIIGAIIMPHNIYL). Residues 257–284 (HSSLVKSREVDRSRRADIREANMYFLIE) lie on the Cytoplasmic side of the membrane. The helical transmembrane segment at 285-304 (ATIALSVSFLINLFVMAVFG) threads the bilayer. Residues 305-346 (QAFYKQTNQAAFNICAKSSLHDYAPIFPRNNLTVAVDIYQGG) lie on the Extracellular side of the membrane. Residue N335 is glycosylated (N-linked (GlcNAc...) asparagine). Residues 347–366 (VILGCLFGPAALYIWAVGLL) traverse the membrane as a helical segment. Topologically, residues 367-397 (AAGQSSTMTGTYAGQFVMEGFLKLRWSRFAR) are cytoplasmic. The chain crosses the membrane as a helical span at residues 398-415 (VLLTRSCAILPTVLLAVF). Over 416 to 426 (RDLRDLSGLND) the chain is Extracellular. The chain crosses the membrane as a helical span at residues 427 to 447 (LLNVLQSLLLPFAVLPILTFT). The Cytoplasmic portion of the chain corresponds to 448–463 (SMPALMQEFANGLVSK). The helical transmembrane segment at 464 to 485 (VITSSIMVLVCAVNLYFVISYV) threads the bilayer. Topologically, residues 486 to 493 (PSLPHPAY) are extracellular. Residues 494–513 (FSLVALLAAAYLGLTTYLVW) form a helical membrane-spanning segment. The Cytoplasmic segment spans residues 514 to 548 (TCLITQGATFLAHNSHQRFLYGLPEEDQEKGRTSG).

Belongs to the NRAMP family.

The protein localises to the late endosome membrane. Its subcellular location is the lysosome membrane. The catalysed reaction is Zn(2+)(in) + H(+)(out) = Zn(2+)(out) + H(+)(in). The enzyme catalyses Fe(2+)(in) + H(+)(out) = Fe(2+)(out) + H(+)(in). It catalyses the reaction Mn(2+)(in) + H(+)(out) = Mn(2+)(out) + H(+)(in). In terms of biological role, macrophage-specific antiporter that fluxes metal ions in either direction against a proton gradient. Localized to late endosomal lysosomal membranes, delivers bivalent cations from the cytosol into these acidic compartments where they may directly affect antimicrobial activity. Involved in iron metabolism and host natural resistance to infection with intracellular parasites. Pathogen resistance involves sequestration of Fe(2+) and Mn(2+), cofactors of both prokaryotic and eukaryotic catalases and superoxide dismutases, not only to protect the macrophage against its own generation of reactive oxygen species, but to deny the cations to the pathogen for synthesis of its protective enzymes. This Bubalus bubalis (Domestic water buffalo) protein is Natural resistance-associated macrophage protein 1 (SLC11A1).